We begin with the raw amino-acid sequence, 77 residues long: Small ribosomal subunit protein uS17 (77 aa).

It belongs to the universal ribosomal protein uS17 family. As to quaternary structure, part of the 30S ribosomal subunit.

Its function is as follows. One of the primary rRNA binding proteins, it binds specifically to the 5'-end of 16S ribosomal RNA. The polypeptide is Small ribosomal subunit protein uS17 (Anaplasma marginale (strain St. Maries)).